The chain runs to 283 residues: Shikimate dehydrogenase (NADP(+)) (283 aa).

Residues 22–24 and T69 contribute to the shikimate site; that span reads SRS. Residue K73 is the Proton acceptor of the active site. 2 residues coordinate shikimate: N93 and D108. NADP(+) contacts are provided by residues 133–137 and L222; that span reads GAGGS. Y224 provides a ligand contact to shikimate. Residue G245 coordinates NADP(+).

It belongs to the shikimate dehydrogenase family. Homodimer.

It catalyses the reaction shikimate + NADP(+) = 3-dehydroshikimate + NADPH + H(+). It functions in the pathway metabolic intermediate biosynthesis; chorismate biosynthesis; chorismate from D-erythrose 4-phosphate and phosphoenolpyruvate: step 4/7. Functionally, involved in the biosynthesis of the chorismate, which leads to the biosynthesis of aromatic amino acids. Catalyzes the reversible NADPH linked reduction of 3-dehydroshikimate (DHSA) to yield shikimate (SA). This is Shikimate dehydrogenase (NADP(+)) from Rhodopseudomonas palustris (strain BisB5).